The following is a 942-amino-acid chain: Alanine--tRNA ligase (942 aa).

Positions 586, 590, 695, and 699 each coordinate Zn(2+).

The protein belongs to the class-II aminoacyl-tRNA synthetase family. Zn(2+) serves as cofactor.

It is found in the cytoplasm. It catalyses the reaction tRNA(Ala) + L-alanine + ATP = L-alanyl-tRNA(Ala) + AMP + diphosphate. Catalyzes the attachment of alanine to tRNA(Ala) in a two-step reaction: alanine is first activated by ATP to form Ala-AMP and then transferred to the acceptor end of tRNA(Ala). Also edits incorrectly charged Ser-tRNA(Ala) and Gly-tRNA(Ala) via its editing domain. In Akkermansia muciniphila (strain ATCC BAA-835 / DSM 22959 / JCM 33894 / BCRC 81048 / CCUG 64013 / CIP 107961 / Muc), this protein is Alanine--tRNA ligase.